Here is a 556-residue protein sequence, read N- to C-terminus: Formate--tetrahydrofolate ligase (556 aa).

T65–T72 provides a ligand contact to ATP.

It belongs to the formate--tetrahydrofolate ligase family.

The catalysed reaction is (6S)-5,6,7,8-tetrahydrofolate + formate + ATP = (6R)-10-formyltetrahydrofolate + ADP + phosphate. The protein operates within one-carbon metabolism; tetrahydrofolate interconversion. The sequence is that of Formate--tetrahydrofolate ligase from Acetivibrio thermocellus (strain ATCC 27405 / DSM 1237 / JCM 9322 / NBRC 103400 / NCIMB 10682 / NRRL B-4536 / VPI 7372) (Clostridium thermocellum).